Here is a 122-residue protein sequence, read N- to C-terminus: MSKALLRFVRLSPTKARLIARQIQGMNAELAIASLEFTPNKAARVLSKVVASAVANGSLDAKSTLIVSCRVDAGPVLRRSIPRAKGRATAIRKPTSHVFVEVAEGKEMKSSKSHKKNQAEGK.

A disordered region spans residues 102 to 122; that stretch reads VAEGKEMKSSKSHKKNQAEGK.

The protein belongs to the universal ribosomal protein uL22 family. Part of the 50S ribosomal subunit.

This protein binds specifically to 23S rRNA; its binding is stimulated by other ribosomal proteins, e.g. L4, L17, and L20. It is important during the early stages of 50S assembly. It makes multiple contacts with different domains of the 23S rRNA in the assembled 50S subunit and ribosome. Its function is as follows. The globular domain of the protein is located near the polypeptide exit tunnel on the outside of the subunit, while an extended beta-hairpin is found that lines the wall of the exit tunnel in the center of the 70S ribosome. The sequence is that of Large ribosomal subunit protein uL22 from Helicobacter pylori (strain G27).